Reading from the N-terminus, the 82-residue chain is Small ribosomal subunit protein bS16 (82 aa).

It belongs to the bacterial ribosomal protein bS16 family.

In Pseudoalteromonas translucida (strain TAC 125), this protein is Small ribosomal subunit protein bS16.